Here is a 352-residue protein sequence, read N- to C-terminus: Protein Wnt-2 (352 aa).

An N-terminal signal peptide occupies residues 1–23 (MWKIHNKLLIYILWIMEIRLVSS). Disulfide bonds link cysteine 65–cysteine 76, cysteine 115–cysteine 123, cysteine 125–cysteine 148, cysteine 196–cysteine 210, cysteine 198–cysteine 205, cysteine 281–cysteine 312, cysteine 297–cysteine 307, cysteine 311–cysteine 351, cysteine 327–cysteine 342, cysteine 329–cysteine 339, and cysteine 334–cysteine 335. N-linked (GlcNAc...) asparagine glycans are attached at residues asparagine 75 and asparagine 119. Serine 202 carries O-palmitoleoyl serine; by PORCN lipidation.

Belongs to the Wnt family. Post-translationally, palmitoleoylated by porcupine. The lipid group functions as a sorting signal, targeting the ligand to polarized vesicles that transport Wnt2 to unique sites at the cell surface. Depalmitoleoylated by notum, leading to inhibit Wnt signaling pathway. As to expression, dynamic expression pattern during embryogenesis. Expression is predominantly segmented, with expression also seen in the limb primordia and presumptive gonads. In embryonic tracheal cells, expression is close to and dorsal to the tracheal placode.

It localises to the secreted. Its subcellular location is the extracellular space. The protein localises to the extracellular matrix. Functionally, binds as a ligand to a family of frizzled seven-transmembrane receptors and acts through a cascade of genes on the nucleus. Segment polarity protein. May function in gonadogenesis and limb development. Wg and Wnt2 have a role in the developing trachea and together are responsible for all dorsal trunk formation. In Drosophila melanogaster (Fruit fly), this protein is Protein Wnt-2 (Wnt2).